The primary structure comprises 328 residues: Neuropeptides B/W receptor type 1 (328 aa).

The Extracellular portion of the chain corresponds to 1-37; it reads MDNASFSEPWPANASGPDPALSCSNASTLAPLPAPLA. 3 N-linked (GlcNAc...) asparagine glycosylation sites follow: Asn-3, Asn-13, and Asn-25. A helical membrane pass occupies residues 38–61; sequence VAVPVVYAVICAVGLAGNSAVLYV. The Cytoplasmic segment spans residues 62–72; the sequence is LLRAPRMKTVT. A helical membrane pass occupies residues 73–97; the sequence is NLFILNLAIADELFTLVLPINIADF. The Extracellular portion of the chain corresponds to 98 to 112; that stretch reads LLRQWPFGELMCKLI. A disulfide bridge connects residues Cys-109 and Cys-188. The chain crosses the membrane as a helical span at residues 113-132; it reads VAIDQYNTFSSLYFLTVMSA. At 133–157 the chain is on the cytoplasmic side; the sequence is DRYLVVLATAESRRVAGRTYSAARA. A helical membrane pass occupies residues 158–177; sequence VSLAVWGIVTLVVLPFAVFA. The Extracellular portion of the chain corresponds to 178–202; sequence RLDDEQGRRQCVLVFPQPEAFWWRA. Residues 203–224 form a helical membrane-spanning segment; that stretch reads SRLYTLVLGFAIPVSTICVLYT. At 225–248 the chain is on the cytoplasmic side; it reads TLLCRLHAMRLDSHAKALERAKKR. Residues 249-273 form a helical membrane-spanning segment; sequence VTFLVVAILAVCLLCWTPYHLSTVV. Topologically, residues 274 to 283 are extracellular; sequence ALTTDLPQTP. Residues 284 to 298 traverse the membrane as a helical segment; that stretch reads LVIAISYFITSLSYA. At 299 to 328 the chain is on the cytoplasmic side; it reads NSCLNPFLYAFLDASFRRNLRQLITCRAAA.

It belongs to the G-protein coupled receptor 1 family. As to expression, found in cerebellum and frontal cortex. Detected at high levels in hippocampus, amygdala and trachea; at moderate levels in fetal brain, pituitary gland and prostate. Not in caudate, accumbens, kidney or liver. Also detected at high levels in lung carcinoma.

The protein resides in the cell membrane. Its function is as follows. Interacts specifically with a number of opioid ligands. Receptor for neuropeptides B and W, which may be involved in neuroendocrine system regulation, food intake and the organization of other signals. Has a higher affinity for neuropeptide B. The protein is Neuropeptides B/W receptor type 1 (NPBWR1) of Homo sapiens (Human).